The primary structure comprises 809 residues: Phospholipase D alpha 1 (809 aa).

Positions 1 to 125 (MAQILLHGTL…LDGHEIDKWV (125 aa)) constitute a C2 domain. D186 is a Ca(2+) binding site. The region spanning 326 to 365 (TMFTHHQKIVVVDSALPGGGGSDKRRIVSFVGGLDLCDGR) is the PLD phosphodiesterase 1 domain. Active-site residues include H331, K333, and D338. H331 is a binding site for a 1,2-diacyl-sn-glycero-3-phosphate. Residues H371 and H405 each contribute to the Ca(2+) site. A 1,2-diacyl-sn-glycero-3-phosphate-binding residues include Q521 and H660. Residues 655–682 (FMIYVHTKMMIVDDEYIIIGSANINQRS) form the PLD phosphodiesterase 2 domain. Catalysis depends on residues H660, K662, and D667. E721 contributes to the Ca(2+) binding site.

The protein belongs to the phospholipase D family. C2-PLD subfamily. Requires Ca(2+) as cofactor.

The enzyme catalyses a 1,2-diacyl-sn-glycero-3-phosphocholine + H2O = a 1,2-diacyl-sn-glycero-3-phosphate + choline + H(+). Functionally, hydrolyzes glycerol-phospholipids at the terminal phosphodiesteric bond. Plays an important role in various cellular processes. The protein is Phospholipase D alpha 1 (PLD1) of Vigna unguiculata (Cowpea).